A 307-amino-acid polypeptide reads, in one-letter code: N-acetylglucosamine-1-phosphotransferase subunit gamma (307 aa).

The signal sequence occupies residues 1-24 (MAGRLAGFLMLLGLASQGPAPAYA). One can recognise an MRH domain in the interval 69–171 (GKCFSLVEST…TFETPLVCHP (103 aa)). A disulfide bridge connects residues C71 and C84. 2 N-linked (GlcNAc...) asparagine glycosylation sites follow: N88 and N115. 2 disulfides stabilise this stretch: C129–C157 and C142–C169. Residues 176 to 279 (VYPTLSEALQ…HTQPTETTHS (104 aa)) enclose the DMAP1-binding domain.

As to quaternary structure, homodimer; disulfide-linked. Hexamer of two alpha (GNPTAB), two beta (GNPTAB) and two gamma (GNPTG) subunits; disulfide-linked. The alpha and/or the beta subunits of the enzyme constitute the catalytic subunits. Post-translationally, cys-245 mediates the formation of the interchain disulfide bond for formation of the homodimer. Cys-142, Cys-157 and Cys-169 are involved in intramolecular disulfide bonds formation. Widely expressed. Highly expressed in the liver, intestine, brain, thymus, testis and ovary.

Its subcellular location is the secreted. It localises to the golgi apparatus. Its function is as follows. Non-catalytic subunit of the N-acetylglucosamine-1-phosphotransferase complex, an enzyme that catalyzes the formation of mannose 6-phosphate (M6P) markers on high mannose type oligosaccharides in the Golgi apparatus. Binds and presents the high mannose glycans of the acceptor to the catalytic alpha and beta subunits (GNPTAB). Enhances the rate of N-acetylglucosamine-1-phosphate transfer to the oligosaccharides of acid hydrolase acceptors. The sequence is that of N-acetylglucosamine-1-phosphotransferase subunit gamma (Gnptg) from Mus musculus (Mouse).